We begin with the raw amino-acid sequence, 59 residues long: DNA gyrase inhibitor YacG (59 aa).

Zn(2+) contacts are provided by cysteine 9, cysteine 12, cysteine 27, and cysteine 31.

This sequence belongs to the DNA gyrase inhibitor YacG family. As to quaternary structure, interacts with GyrB. The cofactor is Zn(2+).

In terms of biological role, inhibits all the catalytic activities of DNA gyrase by preventing its interaction with DNA. Acts by binding directly to the C-terminal domain of GyrB, which probably disrupts DNA binding by the gyrase. The sequence is that of DNA gyrase inhibitor YacG from Geotalea daltonii (strain DSM 22248 / JCM 15807 / FRC-32) (Geobacter daltonii).